Reading from the N-terminus, the 167-residue chain is Crossover junction endodeoxyribonuclease RuvC (167 aa).

Active-site residues include aspartate 14, glutamate 75, and aspartate 147. The Mg(2+) site is built by aspartate 14, glutamate 75, and aspartate 147.

This sequence belongs to the RuvC family. As to quaternary structure, homodimer which binds Holliday junction (HJ) DNA. The HJ becomes 2-fold symmetrical on binding to RuvC with unstacked arms; it has a different conformation from HJ DNA in complex with RuvA. In the full resolvosome a probable DNA-RuvA(4)-RuvB(12)-RuvC(2) complex forms which resolves the HJ. Mg(2+) is required as a cofactor.

It localises to the cytoplasm. It carries out the reaction Endonucleolytic cleavage at a junction such as a reciprocal single-stranded crossover between two homologous DNA duplexes (Holliday junction).. In terms of biological role, the RuvA-RuvB-RuvC complex processes Holliday junction (HJ) DNA during genetic recombination and DNA repair. Endonuclease that resolves HJ intermediates. Cleaves cruciform DNA by making single-stranded nicks across the HJ at symmetrical positions within the homologous arms, yielding a 5'-phosphate and a 3'-hydroxyl group; requires a central core of homology in the junction. The consensus cleavage sequence is 5'-(A/T)TT(C/G)-3'. Cleavage occurs on the 3'-side of the TT dinucleotide at the point of strand exchange. HJ branch migration catalyzed by RuvA-RuvB allows RuvC to scan DNA until it finds its consensus sequence, where it cleaves and resolves the cruciform DNA. In Synechocystis sp. (strain ATCC 27184 / PCC 6803 / Kazusa), this protein is Crossover junction endodeoxyribonuclease RuvC.